Consider the following 337-residue polypeptide: Ornithine carbamoyltransferase (337 aa).

Carbamoyl phosphate-binding positions include 56–59 (STRT), glutamine 83, arginine 107, and 134–137 (HPTQ). L-ornithine is bound by residues asparagine 168, aspartate 232, and 236 to 237 (SM). Residues 274–275 (CL) and arginine 320 contribute to the carbamoyl phosphate site.

The protein belongs to the aspartate/ornithine carbamoyltransferase superfamily. OTCase family.

Its subcellular location is the cytoplasm. It catalyses the reaction carbamoyl phosphate + L-ornithine = L-citrulline + phosphate + H(+). It participates in amino-acid biosynthesis; L-arginine biosynthesis; L-arginine from L-ornithine and carbamoyl phosphate: step 1/3. Its function is as follows. Reversibly catalyzes the transfer of the carbamoyl group from carbamoyl phosphate (CP) to the N(epsilon) atom of ornithine (ORN) to produce L-citrulline. This chain is Ornithine carbamoyltransferase, found in Shigella flexneri serotype 5b (strain 8401).